A 320-amino-acid polypeptide reads, in one-letter code: Zinc finger Ran-binding domain-containing protein 2 (320 aa).

S9 bears the Phosphoserine mark. Residues 9–40 (SDGDWICPDKKCGNVNFARRTSCNRCGREKTT) form a RanBP2-type 1 zinc finger. 3 positions are modified to N6-acetyllysine: K18, K54, and K92. Residues 65–94 (SANDWQCKTCSNVNWARRSECNMCNTPKYA) form a RanBP2-type 2 zinc finger. The tract at residues 117–320 (REESDGEYDE…QVIGENTKQP (204 aa)) is disordered. A phosphoserine mark is found at S120, S153, S181, S188, and S193. A compositionally biased stretch (acidic residues) spans 150–163 (DKESEGEEEDEDED). The interval 151–320 (KESEGEEEDE…QVIGENTKQP (170 aa)) is required for nuclear targeting. Residues 196–210 (KKSNRRSRSKSRSSH) show a composition bias toward basic residues. Low complexity-rich tracts occupy residues 211–224 (SRSS…SSSR) and 232–242 (RSSSSSQSRSR). Over residues 251-273 (SRGSKSRSSSRSHRGSSSPRKRS) the composition is skewed to basic residues.

The protein belongs to the ZRANB2 family. In terms of assembly, interacts with the C-terminal half of SNRP70/U1-70K, the Arg/Ser-rich domain of AKAP17A as well as with U2AF1 and CLK1. In terms of processing, phosphorylated on Ser-310 upon DNA damage, probably by ATM or ATR.

It localises to the nucleus. Functionally, splice factor required for alternative splicing of TRA2B/SFRS10 transcripts. Binds to ssRNA containing the consensus sequence 5'-AGGUAA-3'. May interfere with constitutive 5'-splice site selection. This is Zinc finger Ran-binding domain-containing protein 2 from Pongo abelii (Sumatran orangutan).